A 43-amino-acid polypeptide reads, in one-letter code: Metallothionein-2 (43 aa).

Methionine 1 carries the post-translational modification Blocked amino end (Met).

Belongs to the metallothionein superfamily. Type 5 family.

Its function is as follows. This protein binds cations of several transition elements. Thought to be involved in metal ion homeostasis. The sequence is that of Metallothionein-2 (MtnB) from Drosophila melanogaster (Fruit fly).